The chain runs to 285 residues: Ribosomal protein L11 methyltransferase (285 aa).

Residues T131, G154, D176, and N223 each contribute to the S-adenosyl-L-methionine site.

It belongs to the methyltransferase superfamily. PrmA family.

The protein resides in the cytoplasm. The catalysed reaction is L-lysyl-[protein] + 3 S-adenosyl-L-methionine = N(6),N(6),N(6)-trimethyl-L-lysyl-[protein] + 3 S-adenosyl-L-homocysteine + 3 H(+). In terms of biological role, methylates ribosomal protein L11. The chain is Ribosomal protein L11 methyltransferase from Brucella melitensis biotype 2 (strain ATCC 23457).